Here is a 277-residue protein sequence, read N- to C-terminus: Phosphatidylglycerol--prolipoprotein diacylglyceryl transferase (277 aa).

Helical transmembrane passes span 18–38 (ISVK…LLLA), 51–71 (IIVD…RIYY), 89–109 (IWHG…TAVI), and 116–136 (ISFW…QAIG). Residue arginine 137 coordinates a 1,2-diacyl-sn-glycero-3-phospho-(1'-sn-glycerol). 3 consecutive transmembrane segments (helical) span residues 177-197 (QPTF…LLII), 205-225 (GELF…IEGM), and 235-255 (FRVS…LIIY).

Belongs to the Lgt family.

The protein resides in the cell membrane. The catalysed reaction is L-cysteinyl-[prolipoprotein] + a 1,2-diacyl-sn-glycero-3-phospho-(1'-sn-glycerol) = an S-1,2-diacyl-sn-glyceryl-L-cysteinyl-[prolipoprotein] + sn-glycerol 1-phosphate + H(+). Its pathway is protein modification; lipoprotein biosynthesis (diacylglyceryl transfer). Catalyzes the transfer of the diacylglyceryl group from phosphatidylglycerol to the sulfhydryl group of the N-terminal cysteine of a prolipoprotein, the first step in the formation of mature lipoproteins. This chain is Phosphatidylglycerol--prolipoprotein diacylglyceryl transferase, found in Listeria innocua serovar 6a (strain ATCC BAA-680 / CLIP 11262).